A 573-amino-acid polypeptide reads, in one-letter code: Potassium-transporting ATPase potassium-binding subunit (573 aa).

A run of 10 helical transmembrane segments spans residues 6–26 (ILFA…GSYI), 66–86 (FFSL…ILLL), 135–155 (ALAV…IALI), 177–197 (VFWI…FQGV), 257–277 (IQMV…GKWV), 283–303 (GWLI…VMTI), 382–402 (IFGG…LAVF), 428–448 (MFAL…AAVI), 493–513 (ITIA…VIML), and 537–557 (FIFA…TIFP).

It belongs to the KdpA family. As to quaternary structure, the system is composed of three essential subunits: KdpA, KdpB and KdpC.

The protein localises to the cell inner membrane. Its function is as follows. Part of the high-affinity ATP-driven potassium transport (or Kdp) system, which catalyzes the hydrolysis of ATP coupled with the electrogenic transport of potassium into the cytoplasm. This subunit binds the periplasmic potassium ions and delivers the ions to the membrane domain of KdpB through an intramembrane tunnel. This is Potassium-transporting ATPase potassium-binding subunit from Francisella tularensis subsp. mediasiatica (strain FSC147).